The following is a 199-amino-acid chain: Molybdenum cofactor guanylyltransferase (199 aa).

Residues 12–14 (LAG), K25, N53, D71, and D101 each bind GTP. D101 contacts Mg(2+).

It belongs to the MobA family. Monomer. Requires Mg(2+) as cofactor.

The protein localises to the cytoplasm. The enzyme catalyses Mo-molybdopterin + GTP + H(+) = Mo-molybdopterin guanine dinucleotide + diphosphate. In terms of biological role, transfers a GMP moiety from GTP to Mo-molybdopterin (Mo-MPT) cofactor (Moco or molybdenum cofactor) to form Mo-molybdopterin guanine dinucleotide (Mo-MGD) cofactor. The chain is Molybdenum cofactor guanylyltransferase from Polynucleobacter asymbioticus (strain DSM 18221 / CIP 109841 / QLW-P1DMWA-1) (Polynucleobacter necessarius subsp. asymbioticus).